The sequence spans 315 residues: Methionyl-tRNA formyltransferase (315 aa).

The tract at residues 2-189 (SESLRIIFAG…LITTLKQLAD (188 aa)) is N-terminal domain. Position 113–116 (113–116 (SLLP)) interacts with (6S)-5,6,7,8-tetrahydrofolate. The segment at 210-315 (KEEARIDWSL…EWFVPGNRLA (106 aa)) is C-terminal domain.

The protein belongs to the Fmt family.

It carries out the reaction L-methionyl-tRNA(fMet) + (6R)-10-formyltetrahydrofolate = N-formyl-L-methionyl-tRNA(fMet) + (6S)-5,6,7,8-tetrahydrofolate + H(+). Functionally, attaches a formyl group to the free amino group of methionyl-tRNA(fMet). The formyl group appears to play a dual role in the initiator identity of N-formylmethionyl-tRNA by promoting its recognition by IF2 and preventing the misappropriation of this tRNA by the elongation apparatus. In Escherichia coli O6:H1 (strain CFT073 / ATCC 700928 / UPEC), this protein is Methionyl-tRNA formyltransferase.